A 267-amino-acid chain; its full sequence is 5'-nucleotidase SurE (267 aa).

A divalent metal cation is bound by residues D14, D15, S45, and N100.

Belongs to the SurE nucleotidase family. Requires a divalent metal cation as cofactor.

The protein resides in the cytoplasm. The catalysed reaction is a ribonucleoside 5'-phosphate + H2O = a ribonucleoside + phosphate. In terms of biological role, nucleotidase that shows phosphatase activity on nucleoside 5'-monophosphates. This chain is 5'-nucleotidase SurE, found in Methanosarcina acetivorans (strain ATCC 35395 / DSM 2834 / JCM 12185 / C2A).